Consider the following 113-residue polypeptide: Class I hydrophobin POH1 (113 aa).

A signal peptide spans methionine 1–threonine 26. 4 disulfides stabilise this stretch: cysteine 31–cysteine 93, cysteine 38–cysteine 87, cysteine 39–cysteine 74, and cysteine 94–cysteine 107.

Belongs to the fungal hydrophobin family. Self-assembles to form functional amyloid fibrils called rodlets. Self-assembly into fibrillar rodlets occurs spontaneously at hydrophobic:hydrophilic interfaces and the rodlets further associate laterally to form amphipathic monolayers. In terms of tissue distribution, expressed in the fruiting bodies but not in vegetative mycelium.

The protein localises to the secreted. Its subcellular location is the cell wall. Functionally, aerial growth, conidiation, and dispersal of filamentous fungi in the environment rely upon a capability of their secreting small amphipathic proteins called hydrophobins (HPBs) with low sequence identity. Class I can self-assemble into an outermost layer of rodlet bundles on aerial cell surfaces, conferring cellular hydrophobicity that supports fungal growth, development and dispersal; whereas Class II form highly ordered films at water-air interfaces through intermolecular interactions but contribute nothing to the rodlet structure. POH1 is a class I hydrophobin that is involved in the formation of mycelium knots and subsequent fruiting bodies. This chain is Class I hydrophobin POH1, found in Pleurotus ostreatus (Oyster mushroom).